The chain runs to 217 residues: Uracil-DNA glycosylase (217 aa).

D62 acts as the Proton acceptor in catalysis.

The protein belongs to the uracil-DNA glycosylase (UDG) superfamily. UNG family.

Its subcellular location is the cytoplasm. It carries out the reaction Hydrolyzes single-stranded DNA or mismatched double-stranded DNA and polynucleotides, releasing free uracil.. Functionally, excises uracil residues from the DNA which can arise as a result of misincorporation of dUMP residues by DNA polymerase or due to deamination of cytosine. This is Uracil-DNA glycosylase from Streptococcus pyogenes serotype M3 (strain ATCC BAA-595 / MGAS315).